The chain runs to 170 residues: Ribosome maturation factor RimM (170 aa).

Residues 98–170 (EGQYYWADLE…RIELDWDPDF (73 aa)) enclose the PRC barrel domain.

This sequence belongs to the RimM family. As to quaternary structure, binds ribosomal protein uS19.

The protein localises to the cytoplasm. Its function is as follows. An accessory protein needed during the final step in the assembly of 30S ribosomal subunit, possibly for assembly of the head region. Essential for efficient processing of 16S rRNA. May be needed both before and after RbfA during the maturation of 16S rRNA. It has affinity for free ribosomal 30S subunits but not for 70S ribosomes. The chain is Ribosome maturation factor RimM from Alkalilimnicola ehrlichii (strain ATCC BAA-1101 / DSM 17681 / MLHE-1).